The following is a 337-amino-acid chain: F420-dependent glucose-6-phosphate dehydrogenase 2 (337 aa).

Asp40 is a binding site for coenzyme F420-(gamma-Glu)n. His41 (proton donor) is an active-site residue. Coenzyme F420-(gamma-Glu)n is bound by residues Thr77 and 108–109 (TG). The Proton acceptor role is filled by Glu110. Coenzyme F420-(gamma-Glu)n-binding positions include Asn113, 178 to 179 (GG), and 181 to 182 (VV). Positions 196, 199, 260, and 284 each coordinate substrate.

The protein belongs to the F420-dependent glucose-6-phosphate dehydrogenase family. As to quaternary structure, homodimer.

It carries out the reaction oxidized coenzyme F420-(gamma-L-Glu)(n) + D-glucose 6-phosphate + H(+) = 6-phospho-D-glucono-1,5-lactone + reduced coenzyme F420-(gamma-L-Glu)(n). Its function is as follows. Catalyzes the coenzyme F420-dependent oxidation of glucose 6-phosphate (G6P) to 6-phosphogluconolactone. This is F420-dependent glucose-6-phosphate dehydrogenase 2 from Rhodococcus jostii (strain RHA1).